The primary structure comprises 527 residues: Probable bifunctional methylthioribulose-1-phosphate dehydratase/enolase-phosphatase E1 (527 aa).

Residues 1-244 (MAAAAAPAVA…AIKLHQLGLD (244 aa)) form a methylthioribulose-1-phosphate dehydratase region. Cys116 serves as a coordination point for substrate. Zn(2+)-binding residues include His134 and His136. Glu159 serves as the catalytic Proton donor/acceptor; for methylthioribulose-1-phosphate dehydratase activity. His209 contributes to the Zn(2+) binding site. An enolase-phosphatase E1 region spans residues 288-527 (IVLDIEGTTT…FKTINSLSEI (240 aa)). Mg(2+) is bound by residues Asp291 and Glu293. Substrate is bound by residues 426–427 (SS) and Lys460. Asp486 is a Mg(2+) binding site.

It in the N-terminal section; belongs to the aldolase class II family. MtnB subfamily. This sequence in the C-terminal section; belongs to the HAD-like hydrolase superfamily. MasA/MtnC family. Zn(2+) serves as cofactor. The cofactor is Mg(2+).

The enzyme catalyses 5-(methylsulfanyl)-D-ribulose 1-phosphate = 5-methylsulfanyl-2,3-dioxopentyl phosphate + H2O. The catalysed reaction is 5-methylsulfanyl-2,3-dioxopentyl phosphate + H2O = 1,2-dihydroxy-5-(methylsulfanyl)pent-1-en-3-one + phosphate. Its pathway is amino-acid biosynthesis; L-methionine biosynthesis via salvage pathway; L-methionine from S-methyl-5-thio-alpha-D-ribose 1-phosphate: step 2/6. The protein operates within amino-acid biosynthesis; L-methionine biosynthesis via salvage pathway; L-methionine from S-methyl-5-thio-alpha-D-ribose 1-phosphate: step 3/6. It functions in the pathway amino-acid biosynthesis; L-methionine biosynthesis via salvage pathway; L-methionine from S-methyl-5-thio-alpha-D-ribose 1-phosphate: step 4/6. This is Probable bifunctional methylthioribulose-1-phosphate dehydratase/enolase-phosphatase E1 from Ricinus communis (Castor bean).